The chain runs to 958 residues: N-terminal acetyltransferase B complex subunit NAA25 homolog (958 aa).

TPR repeat units follow at residues 7–42 (AVLERRLRPIYDSLDSQQFKKALSDCDKVLKKHPNT), 78–111 (ELTLQAFVHCYRDSNQHMKVVTLYERIIQVDPSE), and 320–353 (FFAYKQIGKLTKQIPDMDDMTSIFGEQVDKMLEY).

It belongs to the MDM20/NAA25 family. Component of the N-terminal acetyltransferase B (NatB) complex. Interacts with acer-1. Expressed in germline and somatic cells.

It localises to the cytoplasm. Its subcellular location is the nucleus. The protein resides in the chromosome. Functionally, non-catalytic subunit of the NatB complex which catalyzes acetylation of the N-terminal methionine residues of proteins beginning with Met-Asp or Met-Glu. Required for chromosome organization and arrangement; specifically for assembly of the central region components of the synaptonemal complex onto chromosomes during meiosis and for DNA double stranded break formation and repair. Acts downstream of xnd-1 to regulate levels of histone acetylation in germ and somatic cell nuclei by controlling acetyl-CoA production through antagonizing the acetyl-CoA hydrolase activity of acer-1. This Caenorhabditis elegans protein is N-terminal acetyltransferase B complex subunit NAA25 homolog.